Reading from the N-terminus, the 1108-residue chain is Retinal guanylyl cyclase 2 (1108 aa).

The signal sequence occupies residues 1 to 50 (MFLGPWPFSRLLSWFAISSRLSGQHGLTSSKFLRYLCLLALLPLIWWGQA). The Extracellular portion of the chain corresponds to 51-465 (LPYKIGVIGP…QGKICQGGID (415 aa)). Cysteines 104 and 132 form a disulfide. A helical membrane pass occupies residues 466–490 (PALAMMVCFALLLALLSINGFAYFI). Over 491-1108 (RRRINKIQLI…AERQLVRNKP (618 aa)) the chain is Cytoplasmic. Residues 532–812 (FQIISEVQSG…DEIFNQFKTF (281 aa)) form the Protein kinase domain. In terms of domain architecture, Guanylate cyclase spans 884 to 1014 (TLYFSDIVGF…DTVNTASRME (131 aa)).

It belongs to the adenylyl cyclase class-4/guanylyl cyclase family. In terms of assembly, homodimer. Interacts with RD3; promotes the exit of GUCY2F from the endoplasmic reticulum and its trafficking to the photoreceptor outer segments. In terms of processing, there are 9 conserved cysteine residues in sensory guanylate cyclases, 6 in the extracellular domain, which may be involved in intra- or interchain disulfide bonds. In terms of tissue distribution, expressed only in the eye.

It localises to the membrane. Its subcellular location is the photoreceptor outer segment membrane. The enzyme catalyses GTP = 3',5'-cyclic GMP + diphosphate. Activated by GUCA1B when free calcium ions concentration is low, and inhibited by GUCA1B when free calcium ions concentration is high. Inhibited by RD3. In terms of biological role, responsible for the synthesis of cyclic GMP (cGMP) in rods and cones of photoreceptors. Plays an essential role in phototransduction, by mediating cGMP replenishment. May also participate in the trafficking of membrane-asociated proteins to the photoreceptor outer segment membrane. The polypeptide is Retinal guanylyl cyclase 2 (Gucy2f) (Rattus norvegicus (Rat)).